The sequence spans 610 residues: ABC transporter ATP-binding protein/permease wht-3 (610 aa).

Residues 42–277 (VKTRKKLFSK…FADCGHPIPK (236 aa)) enclose the ABC transporter domain. 74-81 (GASGAGKT) is a binding site for ATP. 5 helical membrane-spanning segments follow: residues 396–416 (ALYF…MTFM), 446–466 (LPLF…MIGL), 477–497 (ILIS…LACL), 503–523 (LAIA…GLYG), and 584–604 (VIGL…ALFI).

The protein belongs to the ABC transporter superfamily. ABCG family. Eye pigment precursor importer (TC 3.A.1.204) subfamily.

It is found in the membrane. Required for efficient RNA interference (RNAi) of pop-1 indicating a role in the germline development. The chain is ABC transporter ATP-binding protein/permease wht-3 (wht-3) from Caenorhabditis elegans.